The primary structure comprises 554 residues: Thermosome subunit alpha (554 aa).

Residues 530–554 (PKKKEKKGKTGEEEEEEGGGSKFEF) form a disordered region.

This sequence belongs to the TCP-1 chaperonin family. As to quaternary structure, forms a Heterooligomeric complex of two stacked eight-membered rings.

Molecular chaperone; binds unfolded polypeptides in vitro, and has a weak ATPase activity. The sequence is that of Thermosome subunit alpha (thsA) from Aeropyrum pernix (strain ATCC 700893 / DSM 11879 / JCM 9820 / NBRC 100138 / K1).